The primary structure comprises 119 residues: Protein Wnt-4 (119 aa).

S1 carries O-palmitoleoyl serine; by PORCN lipidation. Intrachain disulfides connect C69-C100 and C85-C95. Residue N86 is glycosylated (N-linked (GlcNAc...) asparagine).

Belongs to the Wnt family. Palmitoleoylation is required for efficient binding to frizzled receptors. Depalmitoleoylation leads to Wnt signaling pathway inhibition.

The protein resides in the secreted. The protein localises to the extracellular space. It localises to the extracellular matrix. Its function is as follows. Ligand for members of the frizzled family of seven transmembrane receptors. Plays an important role in embryonic development. The chain is Protein Wnt-4 (WNT-4) from Sceloporus occidentalis (Western fence lizard).